Reading from the N-terminus, the 70-residue chain is Translational regulator CsrA (70 aa).

This sequence belongs to the CsrA/RsmA family. As to quaternary structure, homodimer; the beta-strands of each monomer intercalate to form a hydrophobic core, while the alpha-helices form wings that extend away from the core.

The protein resides in the cytoplasm. A key translational regulator that binds mRNA to regulate translation initiation and/or mRNA stability. Mediates global changes in gene expression, shifting from rapid growth to stress survival by linking envelope stress, the stringent response and the catabolite repression systems. Usually binds in the 5'-UTR; binding at or near the Shine-Dalgarno sequence prevents ribosome-binding, repressing translation, binding elsewhere in the 5'-UTR can activate translation and/or stabilize the mRNA. Its function is antagonized by small RNA(s). The protein is Translational regulator CsrA of Hydrogenovibrio crunogenus (strain DSM 25203 / XCL-2) (Thiomicrospira crunogena).